A 367-amino-acid chain; its full sequence is Phospho-N-acetylmuramoyl-pentapeptide-transferase (367 aa).

A run of 10 helical transmembrane segments spans residues 27–47 (VLAA…VIRW), 73–93 (TMGG…WGDL), 97–117 (YVWT…YDDW), 132–152 (WKFF…AFSA), 167–187 (TMAY…VIVG), 200–220 (GLAI…AYVT), 237–257 (AGEL…FLWF), 264–284 (VFMG…VAVI), 289–309 (IVLL…MLQV), and 344–364 (QVVV…LSTL).

The protein belongs to the glycosyltransferase 4 family. MraY subfamily. Requires Mg(2+) as cofactor.

It is found in the cell inner membrane. It carries out the reaction UDP-N-acetyl-alpha-D-muramoyl-L-alanyl-gamma-D-glutamyl-meso-2,6-diaminopimeloyl-D-alanyl-D-alanine + di-trans,octa-cis-undecaprenyl phosphate = di-trans,octa-cis-undecaprenyl diphospho-N-acetyl-alpha-D-muramoyl-L-alanyl-D-glutamyl-meso-2,6-diaminopimeloyl-D-alanyl-D-alanine + UMP. The protein operates within cell wall biogenesis; peptidoglycan biosynthesis. Its function is as follows. Catalyzes the initial step of the lipid cycle reactions in the biosynthesis of the cell wall peptidoglycan: transfers peptidoglycan precursor phospho-MurNAc-pentapeptide from UDP-MurNAc-pentapeptide onto the lipid carrier undecaprenyl phosphate, yielding undecaprenyl-pyrophosphoryl-MurNAc-pentapeptide, known as lipid I. The polypeptide is Phospho-N-acetylmuramoyl-pentapeptide-transferase (Dechloromonas aromatica (strain RCB)).